The sequence spans 171 residues: Protein hunchback (171 aa).

Disordered stretches follow at residues 14 to 93 (PMSH…PMQI) and 124 to 171 (SNDK…KYMA). The segment covering 17–31 (HHHHHSHHSHGHHHS) has biased composition (basic residues). Composition is skewed to low complexity over residues 32–42 (NSNSNASSPRQ) and 52–80 (SSSN…DTPL). Residues 152 to 171 (EPEKDHDLMSNSSEDMKYMA) show a composition bias toward basic and acidic residues.

Belongs to the hunchback C2H2-type zinc-finger protein family.

It is found in the nucleus. Functionally, gap class segmentation protein that controls development of head structures. The polypeptide is Protein hunchback (hb) (Scaptomyza albovittata (Fruit fly)).